A 284-amino-acid polypeptide reads, in one-letter code: tRNA-cytidine(32) 2-sulfurtransferase (284 aa).

The span at 1-11 (MTFHQPVSETA) shows a compositional bias: polar residues. The disordered stretch occupies residues 1 to 20 (MTFHQPVSETAQPDEASGHP). Positions 63–68 (SGGKDS) match the PP-loop motif motif. The [4Fe-4S] cluster site is built by cysteine 138, cysteine 141, and cysteine 229.

It belongs to the TtcA family. As to quaternary structure, homodimer. Mg(2+) is required as a cofactor. It depends on [4Fe-4S] cluster as a cofactor.

It localises to the cytoplasm. The catalysed reaction is cytidine(32) in tRNA + S-sulfanyl-L-cysteinyl-[cysteine desulfurase] + AH2 + ATP = 2-thiocytidine(32) in tRNA + L-cysteinyl-[cysteine desulfurase] + A + AMP + diphosphate + H(+). Its pathway is tRNA modification. Catalyzes the ATP-dependent 2-thiolation of cytidine in position 32 of tRNA, to form 2-thiocytidine (s(2)C32). The sulfur atoms are provided by the cysteine/cysteine desulfurase (IscS) system. The sequence is that of tRNA-cytidine(32) 2-sulfurtransferase from Chelativorans sp. (strain BNC1).